Consider the following 350-residue polypeptide: Inactive ADP-ribosyltransferase arh2 (350 aa).

It belongs to the ADP-ribosylglycohydrolase family.

Its subcellular location is the cytoplasm. The protein resides in the myofibril. It localises to the sarcomere. Required for myofibril assembly and outgrowth of the cardiac chambers in the developing heart. Appears to be catalytically inactive, showing no activity against O-acetyl-ADP-ribose. The protein is Inactive ADP-ribosyltransferase arh2 (adprhl1) of Danio rerio (Zebrafish).